A 165-amino-acid chain; its full sequence is ATFRVLAKVLAELGKVSRKIAVGVDNESGGSWTALNAYFRSGTTDVILPDLVPNQKALLYRGGKDTGPVATGVVGVLAYAMSDGNTLAILFSVPYDYNLYSNWWNVKVYSGKRRADQGMSEDLSYGNPYGGDNGWHARKLAYGLKERGFMKSSAQSILEIHATKA.

The tract at residues 1–17 is N-terminal region; sequence ATFRVLAKVLAELGKVS. 5 residues coordinate phosphocholine: Ser41, Val74, Ser92, Pro94, and Tyr125. Positions 92-107 are trp-rich region, which is important for the binding to lipid membrane; the sequence is SVPYDYNLYSNWWNVK.

Belongs to the actinoporin family. Sea anemone subfamily. Octamer or nonamer in membranes. Monomer in the soluble state.

The protein localises to the secreted. It localises to the nematocyst. Its subcellular location is the target cell membrane. Pore-forming protein that forms cations-selective hydrophilic pores of around 1 nm and causes cardiac stimulation and cytolysis. Pore formation is a multi-step process that involves specific recognition of membrane sphingomyelin (but neither cholesterol nor phosphatidylcholine) using aromatic rich region and adjacent phosphocholine (POC) binding site, firm binding to the membrane (mainly driven by hydrophobic interactions) accompanied by the transfer of the N-terminal region to the lipid-water interface and finally pore formation after oligomerization of monomers. Cytolytic effects include red blood cells hemolysis, platelet aggregation and lysis, cytotoxic and cytostatic effects on fibroblasts. Lethality in mammals has been ascribed to severe vasospasm of coronary vessels, cardiac arrhythmia, and inotropic effects. This Oulactis orientalis (Japan anemone) protein is DELTA-actitoxin-Oor1a.